Consider the following 677-residue polypeptide: WD repeat-containing protein 43 (677 aa).

6 WD repeats span residues 11 to 51 (PLAP…LHQE), 57 to 119 (HLSG…LHSK), 124 to 163 (GHDNRVNCIQWHQDSGCLYSCSDDKHIVEWNVQTCKVKCK), 166 to 205 (GDNSSVSSLCISPDGKMLLSAGRTIKLWVLETKEVYRHFT), 207 to 259 (HATP…KEKS), and 267 to 309 (TDEP…YCKK). Phosphoserine is present on serine 77. Residue lysine 309 forms a Glycyl lysine isopeptide (Lys-Gly) (interchain with G-Cter in SUMO1); alternate linkage. Residue lysine 309 forms a Glycyl lysine isopeptide (Lys-Gly) (interchain with G-Cter in SUMO2); alternate linkage. Threonine 321 carries the phosphothreonine modification. A Glycyl lysine isopeptide (Lys-Gly) (interchain with G-Cter in SUMO1); alternate cross-link involves residue lysine 384. A Glycyl lysine isopeptide (Lys-Gly) (interchain with G-Cter in SUMO2); alternate cross-link involves residue lysine 384. Threonine 394 is subject to Phosphothreonine. Phosphoserine occurs at positions 399, 431, 437, and 590. Disordered stretches follow at residues 414–445 (AIKPAPPQTEQVESKRKSGGNEVSIEERLGAM) and 582–677 (SEKT…SEEE). The segment covering 582–592 (SEKTKGATSPG) has biased composition (polar residues). Positions 600 to 652 (EEESSEEESDDEIADKDSEDNWDEDEEESESEKDEDVEEEDEDAEGKDEENGE) are enriched in acidic residues. Basic and acidic residues predominate over residues 653-663 (DRDTASEKELN). A Phosphothreonine modification is found at threonine 656. Serine 658 is modified (phosphoserine). A compositionally biased stretch (acidic residues) spans 664–677 (GDSDLDPENESEEE).

The protein belongs to the UTP5 family. In terms of assembly, part of the small subunit (SSU) processome, composed of more than 70 proteins and the RNA chaperone small nucleolar RNA (snoRNA) U3. May be a component of the proposed t-UTP subcomplex of the ribosomal small subunit (SSU) processome containing at least UTP4, WDR43, HEATR1, UTP15, WDR75. Binds to RNA; binding is required for its chromatin association. Interacts with CDK9, DDX21 and SUPT6H. Interacts with RNA polymerase II. Interacts directly with UTP4 and UTP15.

The protein resides in the nucleus. The protein localises to the nucleolus. It localises to the nucleolus fibrillar center. It is found in the nucleoplasm. Ribosome biogenesis factor that coordinates hyperactive transcription and ribogenesis. Part of the small subunit (SSU) processome, first precursor of the small eukaryotic ribosomal subunit. During the assembly of the SSU processome in the nucleolus, many ribosome biogenesis factors, an RNA chaperone and ribosomal proteins associate with the nascent pre-rRNA and work in concert to generate RNA folding, modifications, rearrangements and cleavage as well as targeted degradation of pre-ribosomal RNA by the RNA exosome. Involved in nucleolar processing of pre-18S ribosomal RNA. Required for optimal pre-ribosomal RNA transcription by RNA polymerase I. Essential for stem cell pluripotency and embryonic development. In the nucleoplasm, recruited by promoter-associated/nascent transcripts and transcription to active promoters where it facilitates releases of elongation factor P-TEFb and paused RNA polymerase II to allow transcription elongation and maintain high-level expression of its targets genes. The sequence is that of WD repeat-containing protein 43 from Homo sapiens (Human).